A 189-amino-acid chain; its full sequence is Hypoxanthine/guanine phosphoribosyltransferase (189 aa).

This sequence belongs to the purine/pyrimidine phosphoribosyltransferase family. Archaeal HPRT subfamily. In terms of assembly, homodimer.

The protein resides in the cytoplasm. It catalyses the reaction IMP + diphosphate = hypoxanthine + 5-phospho-alpha-D-ribose 1-diphosphate. The catalysed reaction is GMP + diphosphate = guanine + 5-phospho-alpha-D-ribose 1-diphosphate. The protein operates within purine metabolism; IMP biosynthesis via salvage pathway; IMP from hypoxanthine: step 1/1. In terms of biological role, catalyzes a salvage reaction resulting in the formation of IMP that is energically less costly than de novo synthesis. This chain is Hypoxanthine/guanine phosphoribosyltransferase (hpt), found in Methanosarcina acetivorans (strain ATCC 35395 / DSM 2834 / JCM 12185 / C2A).